The primary structure comprises 358 residues: Dynein axonemal assembly factor 10 (358 aa).

WD repeat units follow at residues 63–105 (EKKH…QPVF), 109–154 (AHAS…APVA), 162–205 (NNVR…VRWE), 207–249 (NVRN…PKKG), 258–298 (TAGA…QRKV), and 320–358 (ISTQ…LNKV).

In terms of assembly, interacts with PIH1D1; the interaction associates DNAAF10 with the R2TP complex. Interacts with several dynein axonemal assembly factors.

It is found in the dynein axonemal particle. Its function is as follows. Key assembly factor specifically required for the stability of axonemal dynein heavy chains in cytoplasm. The protein is Dynein axonemal assembly factor 10 (dnaaf10) of Chlamydomonas reinhardtii (Chlamydomonas smithii).